Reading from the N-terminus, the 495-residue chain is Cytochrome P450 2B15 (495 aa).

Ser129 is modified (phosphoserine; by PKA). Residue Cys437 coordinates heme.

This sequence belongs to the cytochrome P450 family. It depends on heme as a cofactor.

It localises to the endoplasmic reticulum membrane. It is found in the microsome membrane. It catalyses the reaction an organic molecule + reduced [NADPH--hemoprotein reductase] + O2 = an alcohol + oxidized [NADPH--hemoprotein reductase] + H2O + H(+). Its function is as follows. Cytochromes P450 are a group of heme-thiolate monooxygenases. In liver microsomes, this enzyme is involved in an NADPH-dependent electron transport pathway. It oxidizes a variety of structurally unrelated compounds, including steroids, fatty acids, and xenobiotics. The protein is Cytochrome P450 2B15 (Cyp2b15) of Rattus norvegicus (Rat).